A 93-amino-acid chain; its full sequence is UPF0358 protein ABC2396 (93 aa).

Belongs to the UPF0358 family.

The polypeptide is UPF0358 protein ABC2396 (Shouchella clausii (strain KSM-K16) (Alkalihalobacillus clausii)).